The sequence spans 261 residues: Fructoselysine 6-kinase (261 aa).

This sequence belongs to the carbohydrate kinase PfkB family. Monomer.

The enzyme catalyses N(6)-(D-fructosyl)-L-lysine + ATP = N(6)-(6-phospho-D-fructosyl)-L-lysine + ADP + H(+). Its pathway is carbohydrate metabolism; fructoselysine degradation; D-glucose 6-phosphate and lysine from fructoselysine: step 1/2. Functionally, catalyzes the ATP-dependent phosphorylation of fructoselysine to fructoselysine 6-phosphate. Functions in a fructoselysine degradation pathway that allows E.coli to grow on fructoselysine or psicoselysine. To a much lesser extenst, is also able to phosphorylate psicoselysine. The chain is Fructoselysine 6-kinase from Escherichia coli (strain K12).